A 94-amino-acid chain; its full sequence is Non-specific lipid-transfer protein C4 (94 aa).

The N-terminal stretch at methionine 1 to alanine 26 is a signal peptide. 4 disulfide bridges follow: cysteine 34-cysteine 72, cysteine 44-cysteine 59, cysteine 60-cysteine 85, and cysteine 70-cysteine 92. Residue asparagine 91 is glycosylated (N-linked (GlcNAc...) asparagine).

Belongs to the plant LTP family.

Lipid-transfer protein that may be regulated by the transcription factor UDT1 in developing anthers and play a role in tapetum development. This is Non-specific lipid-transfer protein C4 from Oryza sativa subsp. japonica (Rice).